The primary structure comprises 336 residues: F420-dependent glucose-6-phosphate dehydrogenase (336 aa).

D40 contributes to the coenzyme F420-(gamma-Glu)n binding site. The active-site Proton donor is the H41. Residues T77 and 108–109 each bind coenzyme F420-(gamma-Glu)n; that span reads TG. E110 serves as the catalytic Proton acceptor. Coenzyme F420-(gamma-Glu)n-binding positions include N113, 176–177, and 179–180; these read SG and AA. Residues T194, K197, K258, and R282 each coordinate substrate.

It belongs to the F420-dependent glucose-6-phosphate dehydrogenase family. As to quaternary structure, homodimer.

The catalysed reaction is oxidized coenzyme F420-(gamma-L-Glu)(n) + D-glucose 6-phosphate + H(+) = 6-phospho-D-glucono-1,5-lactone + reduced coenzyme F420-(gamma-L-Glu)(n). Functionally, catalyzes the coenzyme F420-dependent oxidation of glucose 6-phosphate (G6P) to 6-phosphogluconolactone. This Microbacterium testaceum (strain StLB037) protein is F420-dependent glucose-6-phosphate dehydrogenase.